Reading from the N-terminus, the 185-residue chain is Ribosome-recycling factor (185 aa).

Belongs to the RRF family.

Its subcellular location is the cytoplasm. Responsible for the release of ribosomes from messenger RNA at the termination of protein biosynthesis. May increase the efficiency of translation by recycling ribosomes from one round of translation to another. The sequence is that of Ribosome-recycling factor from Exiguobacterium sibiricum (strain DSM 17290 / CCUG 55495 / CIP 109462 / JCM 13490 / 255-15).